The sequence spans 274 residues: tRNA pseudouridine synthase A (274 aa).

Aspartate 52 acts as the Nucleophile in catalysis. Tyrosine 110 is a binding site for substrate.

This sequence belongs to the tRNA pseudouridine synthase TruA family. Homodimer.

It catalyses the reaction uridine(38/39/40) in tRNA = pseudouridine(38/39/40) in tRNA. In terms of biological role, formation of pseudouridine at positions 38, 39 and 40 in the anticodon stem and loop of transfer RNAs. This chain is tRNA pseudouridine synthase A, found in Ralstonia nicotianae (strain ATCC BAA-1114 / GMI1000) (Ralstonia solanacearum).